A 490-amino-acid chain; its full sequence is CUGBP Elav-like family member 1 (490 aa).

RRM domains lie at 16–99 (IKMF…PADS) and 108–188 (RKLF…FADT). The interval 283 to 312 (PSAGSALTTSSSPLSILTSSGSSPSSNNNS) is disordered. The 79-residue stretch at 405–483 (ANLFIYHLPQ…KRLKVQLKRS (79 aa)) folds into the RRM 3 domain.

This sequence belongs to the CELF/BRUNOL family. As to quaternary structure, oligomer. Oligomerization is required for RNA-binding and EDEN-dependent deadenylation. Post-translationally, phosphorylated during oocyte maturation and dephosphorylated following egg activation. Dephosphorylation is calcium dependent and correlates with the increase in the activity of EDEN-dependent deadenylation.

Its subcellular location is the nucleus. It is found in the cytoplasm. Its function is as follows. RNA-binding protein implicated in the regulation of several post-transcriptional events. May be involved in pre-mRNA alternative splicing, mRNA translation activation and stability. Mediates the rapid and sequence-specific cytoplasmic deadenylation of EDEN-containing maternal mRNAs following fertilization. Binds to AU-rich sequences (AREs) of jun mRNA. Binds to the embryonic deadenylation element (EDEN) motif localized in the 3'-UTR of maternal mRNAs. Binds to RNA containing several repeats of the consensus sequence 5'-UGU-3'. EDEN-dependent deadenylation is enhanced by the presence of an additional cis element composed of three AUU repeats. The polypeptide is CUGBP Elav-like family member 1 (celf1) (Xenopus tropicalis (Western clawed frog)).